Consider the following 269-residue polypeptide: MTASNAAIHLYGASLRHGQVRALDAVSLRIAQGERVAIIGPSGAGKSSLLHLMATAIQPSSGRLELLGEQPWALSARARQRLRARVGLVHQSPPLPPRQRVVTAVLAGRLGQWGTLRGLLNLLYPSDVPGARQVLAELGLADKLFVQCGQLSGGQLQRVGIARALYQRPQVLLTDEPVSAMDPVLADHSLALLNRHAQATGVTLVASLHAVELALAHFPRVIGIREGQVVFDCPAEAVTEQLLDALYANEQLAPPPTQGPTLTVQIPRC.

The ABC transporter domain maps to 8–251 (IHLYGASLRH…LLDALYANEQ (244 aa)). 40-47 (GPSGAGKS) serves as a coordination point for ATP.

It belongs to the ABC transporter superfamily. Phosphonates importer (TC 3.A.1.9.1) family. As to quaternary structure, the complex is composed of two ATP-binding proteins (PhnC), two transmembrane proteins (PhnE) and a solute-binding protein (PhnD).

It is found in the cell inner membrane. It carries out the reaction phosphonate(out) + ATP + H2O = phosphonate(in) + ADP + phosphate + H(+). Its function is as follows. Part of the ABC transporter complex PhnCDE involved in phosphonates import. Responsible for energy coupling to the transport system. This is Phosphonates import ATP-binding protein PhnC from Pseudomonas putida (strain ATCC 47054 / DSM 6125 / CFBP 8728 / NCIMB 11950 / KT2440).